A 477-amino-acid chain; its full sequence is Pentatricopeptide repeat-containing protein At1g55630 (477 aa).

9 PPR repeats span residues 151 to 185, 186 to 220, 221 to 255, 256 to 290, 291 to 325, 326 to 360, 361 to 395, 396 to 430, and 431 to 465; these read TANC…GYPT, TACT…NYRP, YKHS…GFTP, DVLT…GFSP, DLYT…GVEP, GVIH…GCTP, DVVC…GQLP, NVFT…GCNP, and NFVV…GHYV.

The protein belongs to the PPR family. P subfamily.

This is Pentatricopeptide repeat-containing protein At1g55630 from Arabidopsis thaliana (Mouse-ear cress).